The primary structure comprises 332 residues: Glycerol-3-phosphate dehydrogenase [NAD(P)+] (332 aa).

NADPH-binding residues include Ser-11, Trp-12, Arg-32, Arg-33, and Lys-106. Sn-glycerol 3-phosphate contacts are provided by Lys-106 and Gly-136. Ala-140 contributes to the NADPH binding site. Residues Lys-191, Asp-244, Ser-254, Arg-255, and Asn-256 each coordinate sn-glycerol 3-phosphate. Lys-191 acts as the Proton acceptor in catalysis. NADPH is bound at residue Arg-255. Val-280 and Glu-282 together coordinate NADPH.

Belongs to the NAD-dependent glycerol-3-phosphate dehydrogenase family.

It is found in the cytoplasm. It catalyses the reaction sn-glycerol 3-phosphate + NAD(+) = dihydroxyacetone phosphate + NADH + H(+). The enzyme catalyses sn-glycerol 3-phosphate + NADP(+) = dihydroxyacetone phosphate + NADPH + H(+). The protein operates within membrane lipid metabolism; glycerophospholipid metabolism. Functionally, catalyzes the reduction of the glycolytic intermediate dihydroxyacetone phosphate (DHAP) to sn-glycerol 3-phosphate (G3P), the key precursor for phospholipid synthesis. In Corynebacterium aurimucosum (strain ATCC 700975 / DSM 44827 / CIP 107346 / CN-1) (Corynebacterium nigricans), this protein is Glycerol-3-phosphate dehydrogenase [NAD(P)+].